A 337-amino-acid chain; its full sequence is Glyceraldehyde-3-phosphate dehydrogenase (337 aa).

NAD(+)-binding positions include Arg17–Ile18, Asp39, Lys83, and Ser125. D-glyceraldehyde 3-phosphate is bound by residues Ser156–Thr158, Thr187, Arg202, Thr215–Gly216, and Arg238. Catalysis depends on Cys157, which acts as the Nucleophile. Asn319 lines the NAD(+) pocket.

It belongs to the glyceraldehyde-3-phosphate dehydrogenase family. In terms of assembly, homotetramer.

The protein resides in the cytoplasm. The enzyme catalyses D-glyceraldehyde 3-phosphate + phosphate + NAD(+) = (2R)-3-phospho-glyceroyl phosphate + NADH + H(+). It participates in carbohydrate degradation; glycolysis; pyruvate from D-glyceraldehyde 3-phosphate: step 1/5. Catalyzes the oxidative phosphorylation of glyceraldehyde 3-phosphate (G3P) to 1,3-bisphosphoglycerate (BPG) using the cofactor NAD. The first reaction step involves the formation of a hemiacetal intermediate between G3P and a cysteine residue, and this hemiacetal intermediate is then oxidized to a thioester, with concomitant reduction of NAD to NADH. The reduced NADH is then exchanged with the second NAD, and the thioester is attacked by a nucleophilic inorganic phosphate to produce BPG. The chain is Glyceraldehyde-3-phosphate dehydrogenase (gapA) from Mycoplasma pneumoniae (strain ATCC 29342 / M129 / Subtype 1) (Mycoplasmoides pneumoniae).